The primary structure comprises 600 residues: Integrator complex subunit 11 (600 aa).

The Zn(2+) site is built by His68, His70, Asp72, His73, His157, and Asp178. The HXHXDH motif signature appears at 68 to 73; the sequence is HFHLDH. Glu203 is a catalytic residue. His414 is a Zn(2+) binding site. The Nuclear localization signal signature appears at 469–479; it reads LLPDAKKPKLM.

The protein belongs to the metallo-beta-lactamase superfamily. RNA-metabolizing metallo-beta-lactamase-like family. INTS11 subfamily. In terms of assembly, component of the Integrator complex, composed of core subunits INTS1, INTS2, INTS3, INTS4, INTS5, INTS6, INTS7, INTS8, INTS9/RC74, INTS10, INTS11/CPSF3L, INTS12, INTS13, INTS14 and INTS15. The core complex associates with protein phosphatase 2A subunits PPP2CA and PPP2R1A, to form the Integrator-PP2A (INTAC) complex. INTS11 is part of the RNA endonuclease subcomplex, composed of INTS4, INTS9, INTS11 and inositol hexakisphosphate (InsP6). The cofactor is Zn(2+).

The protein localises to the nucleus. Its subcellular location is the cytoplasm. RNA endonuclease component of the integrator complex, a multiprotein complex that terminates RNA polymerase II (Pol II) transcription in the promoter-proximal region of genes. The integrator complex provides a quality checkpoint during transcription elongation by driving premature transcription termination of transcripts that are unfavorably configured for transcriptional elongation: the complex terminates transcription by (1) catalyzing dephosphorylation of the C-terminal domain (CTD) of Pol II subunit POLR2A/RPB1 and SUPT5H/SPT5, (2) degrading the exiting nascent RNA transcript via endonuclease activity and (3) promoting the release of Pol II from bound DNA. The integrator complex is also involved in terminating the synthesis of non-coding Pol II transcripts, such as enhancer RNAs (eRNAs), small nuclear RNAs (snRNAs), telomerase RNAs and long non-coding RNAs (lncRNAs). Within the integrator complex, INTS11 constitutes the RNA endonuclease subunit that degrades exiting nascent RNA transcripts. The polypeptide is Integrator complex subunit 11 (INTS11) (Gallus gallus (Chicken)).